A 406-amino-acid chain; its full sequence is Prenyltransferase phqJ (406 aa).

The span at 1 to 19 (MTVSTESNFPHGASTQKPQ) shows a compositional bias: polar residues. Residues 1-23 (MTVSTESNFPHGASTQKPQSAEP) are disordered. Glu-99 is a brevianamide F binding site. Residues Arg-113, Lys-200, and Tyr-202 each contribute to the dimethylallyl diphosphate site. Tyr-204 is a binding site for brevianamide F. Dimethylallyl diphosphate-binding residues include Lys-269, Tyr-271, and Tyr-340.

The protein belongs to the tryptophan dimethylallyltransferase family.

The protein operates within alkaloid biosynthesis. Its function is as follows. Prenyltransferase; part of the gene cluster that mediates the biosynthesis of paraherquamide, a fungal indole alkaloid that belongs to a family of natural products containing a characteristic bicyclo[2.2.2]diazaoctane core. The first steps in the biosynthesis of paraherquamide is the production of the beta-methyl-proline precursor from L-isoleucine. They require oxidation of a terminally hydroxylated L-isoleucine to the corresponding aldehyde by enzymes which have still to be identified. Spontaneous cyclization and dehydration would yield the 4-methyl pyrolline-5-carboxylic acid, which is then reduced by the pyrroline-5-carboxylate reductase phqD leading to the beta-methyl-proline precursor. The next step of paraherquamide biosynthesis involves coupling of beta-methyl-proline and L-tryptophan by the bimodular NRPS phqB, to produce a monooxopiperazine intermediate. The reductase (R) domain of phqB utilizes NADPH for hydride transfer to reduce the thioester bond of the T domain-tethered linear dipeptide to a hemithioaminal intermediate, which spontaneously cleaves the C-S bond to release the aldehyde product. This compound undergoes spontaneous cyclization and dehydration to give a dienamine which is reverse prenylated at C-2 by the reverse prenyltransferase phqJ. The other prenyltransferase present in the cluster, phqI may be a redundant gene in the pathway. During biosynthetic assembly, the key step to produce the polycyclic core is catalyzed by the bifunctional reductase and intramolecular [4+2] Diels-Alderase, phqE, resulting in formation of the [2.2.2] diazaoctane intermediate preparaherquamide. Following formation of preparaherquamide, an indole 2,3-epoxidation-initiated pinacol-like rearrangement is catalyzed by the phqK FAD-dependent monooxygenase. The prenyltransferase phqA, the cytochrome P450 monooxygenase phqL, and the FAD-linked oxidoreductase phqH (or the cytochrome P450 monooxygenase phqM), are proposed to be involved in the formation of the pyran ring. The FAD-dependent monooxygenase phqK is likely responsible for generation of the spiro-oxindole, and the N-methylation is likely mediated by the phqN methyltransferase leading to the isolable natural product paraherquamide F. However, the order of these biosynthetic steps has still to be determined. In late-stage paraherquamide biosynthesis, the third P450 monooxygenase, phqO, is probably responsible for the C-14 hydroxylation, transforming paraherquamide F to paraherquamide G, and paraherquamide E to the final product paraherquamide A. The expansion from the 6-membered ring pyran (in paraherquamides F and G) to the 7-membered dioxepin ring (in paraherquamides A and E) represents a poorly understood but intriguing process that probably involves the 2-oxoglutarate-dependent dioxygenase phqC. Finally, the remaining members of the paraherquamide cluster, including phqI as well as phqM (or phqH), do not have a clearly prescribed role and appear to be redundant. The polypeptide is Prenyltransferase phqJ (Penicillium fellutanum).